The chain runs to 302 residues: MNQTAINRADARTRFIFDDMPVRGLHVRLENVWQHIVKQKNYPAAIRCALGELLAAGVLLSGNLKNEGTLIVQVQGQGKLKMLVAEATSDRTVRATARWDETAEIADDESLGDLLGGNGVFVLTLQPKDGEPWQGVVPLEGGSIAQMLVNYMKRSEQLDTHIALSASDEAAGGLLVQRLPEEVLDEEAWEHVSTLARTLTAEELAELDAQHVLYRLFHETPPRVFEPETFESSCTCSRGKVSDMLLMLGGEEVGGVVAEQGSIEVDCDFCHSKYVFDETDVNALFGEDVVGVAKGLPRHTVQ.

Intrachain disulfides connect Cys234–Cys236 and Cys267–Cys270.

It belongs to the HSP33 family. In terms of processing, under oxidizing conditions two disulfide bonds are formed involving the reactive cysteines. Under reducing conditions zinc is bound to the reactive cysteines and the protein is inactive.

It is found in the cytoplasm. In terms of biological role, redox regulated molecular chaperone. Protects both thermally unfolding and oxidatively damaged proteins from irreversible aggregation. Plays an important role in the bacterial defense system toward oxidative stress. This chain is 33 kDa chaperonin, found in Neisseria gonorrhoeae (strain NCCP11945).